A 217-amino-acid polypeptide reads, in one-letter code: Uracil-DNA glycosylase (217 aa).

The active-site Proton acceptor is the aspartate 62.

It belongs to the uracil-DNA glycosylase (UDG) superfamily. UNG family.

The protein localises to the cytoplasm. It catalyses the reaction Hydrolyzes single-stranded DNA or mismatched double-stranded DNA and polynucleotides, releasing free uracil.. In terms of biological role, excises uracil residues from the DNA which can arise as a result of misincorporation of dUMP residues by DNA polymerase or due to deamination of cytosine. This chain is Uracil-DNA glycosylase, found in Streptococcus pneumoniae (strain P1031).